Consider the following 187-residue polypeptide: Adenylate kinase (187 aa).

Residue 11–16 (GAGKGT) participates in ATP binding. An NMP region spans residues 31–60 (STGDILREAVKNQTPMGIEAKRYMDAGDLV). Residues Thr-32, Arg-37, 58 to 60 (DLV), 86 to 89 (GFPR), and Gln-93 each bind AMP. The interval 127–137 (GRAEIEGRADD) is LID. An ATP-binding site is contributed by Arg-128. AMP contacts are provided by Arg-134 and Arg-145. An ATP-binding site is contributed by Gly-173.

The protein belongs to the adenylate kinase family. In terms of assembly, monomer.

Its subcellular location is the cytoplasm. The enzyme catalyses AMP + ATP = 2 ADP. It participates in purine metabolism; AMP biosynthesis via salvage pathway; AMP from ADP: step 1/1. In terms of biological role, catalyzes the reversible transfer of the terminal phosphate group between ATP and AMP. Plays an important role in cellular energy homeostasis and in adenine nucleotide metabolism. The polypeptide is Adenylate kinase (Leptospira borgpetersenii serovar Hardjo-bovis (strain JB197)).